Reading from the N-terminus, the 1375-residue chain is DNA-directed RNA polymerase subunit beta (1375 aa).

It belongs to the RNA polymerase beta chain family. The RNAP catalytic core consists of 2 alpha, 1 beta, 1 beta' and 1 omega subunit. When a sigma factor is associated with the core the holoenzyme is formed, which can initiate transcription.

The catalysed reaction is RNA(n) + a ribonucleoside 5'-triphosphate = RNA(n+1) + diphosphate. Functionally, DNA-dependent RNA polymerase catalyzes the transcription of DNA into RNA using the four ribonucleoside triphosphates as substrates. In Coxiella burnetii (strain CbuG_Q212) (Coxiella burnetii (strain Q212)), this protein is DNA-directed RNA polymerase subunit beta.